A 96-amino-acid chain; its full sequence is Co-chaperonin GroES (96 aa).

This sequence belongs to the GroES chaperonin family. In terms of assembly, heptamer of 7 subunits arranged in a ring. Interacts with the chaperonin GroEL.

Its subcellular location is the cytoplasm. Together with the chaperonin GroEL, plays an essential role in assisting protein folding. The GroEL-GroES system forms a nano-cage that allows encapsulation of the non-native substrate proteins and provides a physical environment optimized to promote and accelerate protein folding. GroES binds to the apical surface of the GroEL ring, thereby capping the opening of the GroEL channel. This is Co-chaperonin GroES from Photobacterium profundum (strain SS9).